Consider the following 237-residue polypeptide: RNA chaperone ProQ (237 aa).

The interval 106–188 (AKARVQAQRA…QPRPVPVTDI (83 aa)) is disordered. Basic and acidic residues predominate over residues 146-158 (PRREAGAAPENRK).

This sequence belongs to the ProQ family.

It localises to the cytoplasm. In terms of biological role, RNA chaperone with significant RNA binding, RNA strand exchange and RNA duplexing activities. May regulate ProP activity through an RNA-based, post-transcriptional mechanism. The polypeptide is RNA chaperone ProQ (Yersinia pseudotuberculosis serotype O:1b (strain IP 31758)).